The following is a 215-amino-acid chain: Large ribosomal subunit protein uL3 (215 aa).

The segment at 134–166 is disordered; the sequence is MAHGSKNHRAPGSIGAGTTPGRVFPGKRMPGRM.

The protein belongs to the universal ribosomal protein uL3 family. Part of the 50S ribosomal subunit. Forms a cluster with proteins L14 and L19.

Its function is as follows. One of the primary rRNA binding proteins, it binds directly near the 3'-end of the 23S rRNA, where it nucleates assembly of the 50S subunit. This Gloeobacter violaceus (strain ATCC 29082 / PCC 7421) protein is Large ribosomal subunit protein uL3.